Here is a 526-residue protein sequence, read N- to C-terminus: piRNA biogenesis factor prde-1 (526 aa).

A disordered region spans residues 436-526 (EAKEEPIDKK…RRRGCEIRRK (91 aa)). Basic and acidic residues predominate over residues 439–448 (EEPIDKKKDP). Residues 458-467 (GKKRRGRKPK) show a composition bias toward basic residues. The segment covering 468–487 (KKDDPKMELKDEVKDLKDFV) has biased composition (basic and acidic residues). Low complexity predominate over residues 489–498 (EESTSASSSA).

As to expression, expressed in male and female germ cells.

It is found in the nucleus. The protein resides in the chromosome. Nuclear factor required for the production of piwi-interacting RNA (piRNA) precursors. Specifically required for piRNAs produced from loci associated with the Ruby motif. Promotes binding of the transcription factor snpc-4 at piRNA genomic clusters. Required for normal fertility. In Caenorhabditis elegans, this protein is piRNA biogenesis factor prde-1.